We begin with the raw amino-acid sequence, 507 residues long: Histidine ammonia-lyase (507 aa).

Residues 143–145 constitute a cross-link (5-imidazolinone (Ala-Gly)); it reads ASG. A 2,3-didehydroalanine (Ser) modification is found at serine 144.

This sequence belongs to the PAL/histidase family. Post-translationally, contains an active site 4-methylidene-imidazol-5-one (MIO), which is formed autocatalytically by cyclization and dehydration of residues Ala-Ser-Gly.

It is found in the cytoplasm. The enzyme catalyses L-histidine = trans-urocanate + NH4(+). It participates in amino-acid degradation; L-histidine degradation into L-glutamate; N-formimidoyl-L-glutamate from L-histidine: step 1/3. This chain is Histidine ammonia-lyase, found in Alkaliphilus oremlandii (strain OhILAs) (Clostridium oremlandii (strain OhILAs)).